The sequence spans 265 residues: Early E4 31 kDa protein (265 aa).

It belongs to the adenoviridae E4 30 to 34 kDa protein family. Interacts with E1B-55k.

It is found in the host nucleus. Its subcellular location is the host cytoplasm. Its function is as follows. Plays a major role to prevent cellular inhibition of viral genome replication by nuclear bodies. Assembles an SCF-like E3 ubiquitin ligase complex based on the cellular proteins ELOB, ELOC, CUL5 and RBX1, in cooperation with viral E1B-55K. This viral RING-type ligase ubiquitinates cellular substrates prior to proteasomal degradation: p53/TP53, LIG4, MRE11-RAD50-NBS1 (MRN) complex, ITGA3, DAXX and BLM. The polypeptide is Early E4 31 kDa protein (Canis lupus familiaris (Dog)).